Reading from the N-terminus, the 86-residue chain is UPF0297 protein CA_C1679 (86 aa).

The protein belongs to the UPF0297 family.

In Clostridium acetobutylicum (strain ATCC 824 / DSM 792 / JCM 1419 / IAM 19013 / LMG 5710 / NBRC 13948 / NRRL B-527 / VKM B-1787 / 2291 / W), this protein is UPF0297 protein CA_C1679.